The chain runs to 272 residues: MPGSWPPRTVIRKSSGLRTLESALYRNGLGPVAGVDEVGRGACAGPLVVAACVLGPNRLESLAALDDSKKLGEKERERLFPLIRRYALAYHVVFIPSHEVDRRGVHVANIEGMRRAVAGLSVRPGYVLSDGFRVPGLSVPSLPVIGGDAAAACIAAASVLAKVSRDRLMVEMEEQHPGYGFAEHKGYITPAHTAALTRHGPCVEHRYSYVNVRRAAEATGVRWASDRVGVRWSTESAAETEEVRRALEAFEVEWVTAPVEHEDAACAKMGSG.

Residues 30-221 (GPVAGVDEVG…VRRAAEATGV (192 aa)) form the RNase H type-2 domain. 3 residues coordinate a divalent metal cation: Asp-36, Glu-37, and Asp-130.

This sequence belongs to the RNase HII family. It depends on Mn(2+) as a cofactor. The cofactor is Mg(2+).

The protein localises to the cytoplasm. It carries out the reaction Endonucleolytic cleavage to 5'-phosphomonoester.. In terms of biological role, endonuclease that specifically degrades the RNA of RNA-DNA hybrids. This chain is Ribonuclease HII, found in Mycolicibacterium smegmatis (strain ATCC 700084 / mc(2)155) (Mycobacterium smegmatis).